A 471-amino-acid chain; its full sequence is Secretogranin-3 (471 aa).

The signal sequence occupies residues 1 to 22 (MGFLWTGSWILVLVLNSGPIQA). 3 disordered regions span residues 24–45 (PKPE…ERPL), 89–108 (TVEK…QLNV), and 345–404 (KLEK…TDEA). Basic and acidic residues predominate over residues 28–45 (GSQDKSLHNRELSAERPL). Ser-40 is modified (phosphoserine). Ser-40 is a glycosylation site (O-linked (Xyl...) (chondroitin sulfate) serine). Basic and acidic residues-rich tracts occupy residues 345–355 (KLEKNTTDSKS) and 364–404 (KSQE…TDEA). Phosphoserine is present on Ser-365.

In terms of assembly, interacts with CHGA. Interacts with secretogranin II/SCG2. Interacts (via C-terminus) with CPE. As to expression, expressed in various brain areas, with highest levels in the arcuate nucleus and the lateral hypothalamic area, as well as the paraventricular nucleus and the ventromedial hypothalamus (at protein level).

The protein resides in the cytoplasmic vesicle. Its subcellular location is the secretory vesicle. It localises to the secretory vesicle membrane. The protein localises to the secreted. Functionally, member of the granin protein family that regulates the biogenesis of secretory granules. Acts as a sorting receptor for intragranular proteins including chromogranin A/CHGA. May also play a role in angiogenesis. Promotes endothelial proliferation, migration and tube formation through MEK/ERK signaling pathway. The polypeptide is Secretogranin-3 (Scg3) (Mus musculus (Mouse)).